We begin with the raw amino-acid sequence, 504 residues long: Aspartyl/glutamyl-tRNA(Asn/Gln) amidotransferase subunit B (504 aa).

It belongs to the GatB/GatE family. GatB subfamily. As to quaternary structure, heterotrimer of A, B and C subunits.

It catalyses the reaction L-glutamyl-tRNA(Gln) + L-glutamine + ATP + H2O = L-glutaminyl-tRNA(Gln) + L-glutamate + ADP + phosphate + H(+). It carries out the reaction L-aspartyl-tRNA(Asn) + L-glutamine + ATP + H2O = L-asparaginyl-tRNA(Asn) + L-glutamate + ADP + phosphate + 2 H(+). Allows the formation of correctly charged Asn-tRNA(Asn) or Gln-tRNA(Gln) through the transamidation of misacylated Asp-tRNA(Asn) or Glu-tRNA(Gln) in organisms which lack either or both of asparaginyl-tRNA or glutaminyl-tRNA synthetases. The reaction takes place in the presence of glutamine and ATP through an activated phospho-Asp-tRNA(Asn) or phospho-Glu-tRNA(Gln). The chain is Aspartyl/glutamyl-tRNA(Asn/Gln) amidotransferase subunit B from Rhodococcus opacus (strain B4).